A 1711-amino-acid chain; its full sequence is Hybrid PKS-NRPS synthetase TAS1 (1711 aa).

Residues 43 to 397 (APLSKMQRAL…RNGLNSEHRV (355 aa)) form a condensation (C) domain region. The tract at residues 506–907 (QQQATLRPEQ…TVLLYGRINN (402 aa)) is adenylation (A) domain. The Carrier 1 domain occupies 1043–1119 (LEWAAAKARI…SQVGLVQSRR (77 aa)). Ser-1079 carries the post-translational modification O-(pantetheine 4'-phosphoryl)serine. The span at 1114–1127 (LVQSRRGSSGSPRT) shows a compositional bias: polar residues. The segment at 1114 to 1159 (LVQSRRGSSGSPRTVRSHARPQRKAKTPPRQARPETPESDYDQLPD) is disordered. Over residues 1128-1140 (VRSHARPQRKAKT) the composition is skewed to basic residues. A Carrier 2 domain is found at 1159 to 1236 (DLRDDVQQSI…AQVELLGRFT (78 aa)). Residue Ser-1195 is modified to O-(pantetheine 4'-phosphoryl)serine. The 418-residue stretch at 1266–1683 (REQYAIVGMS…GSTAHVVLSA (418 aa)) folds into the Ketosynthase family 3 (KS3) domain. Active-site for beta-ketoacyl synthase activity residues include Cys-1429, His-1565, and Asn-1608.

The protein in the N-terminal section; belongs to the NRP synthetase family. The cofactor is pantetheine 4'-phosphate.

The enzyme catalyses acetoacetyl-CoA + L-isoleucine + ATP = tenuazonic acid + AMP + diphosphate + CoA + 2 H(+). Its function is as follows. Hybrid PKS-NRPS synthetase that mediates the biosynthesis of the toxin tenuazonic acid (TeA), an inhibitor of protein biosynthesis on ribosomes by suppressing the release of new protein. TAS1 alone is sufficient for TeA synthesis via the condensation of isoleucine (Ile) with acetoacetyl-CoA by the N-terminal NRPS module and subsequent cyclization conducted by the C-terminal KS domain. The protein is Hybrid PKS-NRPS synthetase TAS1 of Botryobasidium botryosum (strain FD-172 SS1).